The sequence spans 231 residues: Protein FMP52, mitochondrial (231 aa).

The transit peptide at 1–44 (MNGLVLGATGLCGGGFLRHAQEAPQFSKVYAILRRELPFPATDK) directs the protein to the mitochondrion.

Belongs to the FMP52 family.

It localises to the mitochondrion outer membrane. The polypeptide is Protein FMP52, mitochondrial (FMP52) (Saccharomyces cerevisiae (strain ATCC 204508 / S288c) (Baker's yeast)).